We begin with the raw amino-acid sequence, 49 residues long: Light-harvesting protein B-875 beta chain (49 aa).

The Cytoplasmic portion of the chain corresponds to 2-27 (ADKSDLGYTGLTDEQAQELHSVYMSG). A bacteriochlorophyll-binding residues include histidine 21 and histidine 39. A helical; Signal-anchor for type II membrane protein transmembrane segment spans residues 28–45 (LWPFSAVAIVAHLAVYIW). Residues 46-49 (RPWF) lie on the Periplasmic side of the membrane.

It belongs to the antenna complex beta subunit family. As to quaternary structure, the core complex is formed by different alpha and beta chains, binding bacteriochlorophyll molecules, and arranged most probably in tetrameric structures disposed around the reaction center. The non-pigmented gamma chains may constitute additional components.

The protein localises to the cell inner membrane. Antenna complexes are light-harvesting systems, which transfer the excitation energy to the reaction centers. This chain is Light-harvesting protein B-875 beta chain (pufB), found in Cereibacter sphaeroides (Rhodobacter sphaeroides).